A 298-amino-acid chain; its full sequence is Ethanolamine ammonia-lyase small subunit (298 aa).

Residues 15-43 (ASMGQDVPQPVAPSTQEGAKPQRAAPTAT) are disordered. Residues Val-210, Glu-231, and Cys-261 each contribute to the adenosylcob(III)alamin site.

It belongs to the EutC family. As to quaternary structure, the basic unit is a heterodimer which dimerizes to form tetramers. The heterotetramers trimerize; 6 large subunits form a core ring with 6 small subunits projecting outwards. The cofactor is adenosylcob(III)alamin.

The protein resides in the bacterial microcompartment. It carries out the reaction ethanolamine = acetaldehyde + NH4(+). The protein operates within amine and polyamine degradation; ethanolamine degradation. Catalyzes the deamination of various vicinal amino-alcohols to oxo compounds. Allows this organism to utilize ethanolamine as the sole source of nitrogen and carbon in the presence of external vitamin B12. The polypeptide is Ethanolamine ammonia-lyase small subunit (Salmonella arizonae (strain ATCC BAA-731 / CDC346-86 / RSK2980)).